The primary structure comprises 511 residues: Probable pectinesterase/pectinesterase inhibitor 17 (511 aa).

A signal peptide spans 1 to 23 (MMAFRAYIINFVILCILVASTVS). The tract at residues 24–171 (GYNQKDVKAW…SNLLCNTLAI (148 aa)) is pectinesterase inhibitor 17. Residues Asn112 and Asn160 are each glycosylated (N-linked (GlcNAc...) asparagine). Positions 237–414 (VKQGVYSENL…LRPVLGSTKT (178 aa)) are pectinesterase 17. Residues Thr277 and Gln307 each coordinate substrate. The active-site Proton donor; for pectinesterase activity is Asp330. Cysteines 344 and 364 form a disulfide. Asp351 acts as the Nucleophile; for pectinesterase activity in catalysis. Positions 418 and 420 each coordinate substrate.

In the N-terminal section; belongs to the PMEI family. The protein in the C-terminal section; belongs to the pectinesterase family. As to expression, expressed in siliques.

The protein localises to the secreted. It is found in the cell wall. The catalysed reaction is [(1-&gt;4)-alpha-D-galacturonosyl methyl ester](n) + n H2O = [(1-&gt;4)-alpha-D-galacturonosyl](n) + n methanol + n H(+). Its pathway is glycan metabolism; pectin degradation; 2-dehydro-3-deoxy-D-gluconate from pectin: step 1/5. Its function is as follows. Acts in the modification of cell walls via demethylesterification of cell wall pectin. The chain is Probable pectinesterase/pectinesterase inhibitor 17 (PME17) from Arabidopsis thaliana (Mouse-ear cress).